Consider the following 184-residue polypeptide: CASP-like protein 1U1 (184 aa).

The Cytoplasmic portion of the chain corresponds to 1 to 30 (MSSTGTTLSASEGDKGFRNGAAPAKSKSHS). The chain crosses the membrane as a helical span at residues 31–51 (TIALLRLLAFAATLSAFVTMI). The Extracellular portion of the chain corresponds to 52 to 76 (TNKQKITIGPFTRWSKWHYSDAFMW). Residues 77 to 97 (FVVANCIAFIYLLFAAILGLI) form a helical membrane-spanning segment. Topologically, residues 98–111 (SHSPMLVKHLVILD) are cytoplasmic. Residues 112-132 (LIVSYMLFSAASAATAVAYIG) form a helical membrane-spanning segment. Over 133–154 (KNGISQPGWTAICGVFERYCHH) the chain is Extracellular. The helical transmembrane segment at 155 to 175 (VAGALVACFLGWLFLTIAVFL) threads the bilayer. The Cytoplasmic segment spans residues 176–184 (GMRRSPAAV).

The protein belongs to the Casparian strip membrane proteins (CASP) family. In terms of assembly, homodimer and heterodimers.

It is found in the cell membrane. The sequence is that of CASP-like protein 1U1 from Marchantia polymorpha (Common liverwort).